Reading from the N-terminus, the 534-residue chain is CTP synthase (534 aa).

The interval 1–266 (MKTKFLFITG…DERIIDYLNI (266 aa)) is amidoligase domain. Position 14 (serine 14) interacts with CTP. Serine 14 contacts UTP. Residues 15–20 (SLGKGL) and aspartate 72 each bind ATP. 2 residues coordinate Mg(2+): aspartate 72 and glutamate 140. Residues 147–149 (DIE), 187–192 (KTKPTQ), and lysine 223 contribute to the CTP site. UTP is bound by residues 187-192 (KTKPTQ) and lysine 223. 239–241 (RDV) lines the ATP pocket. The Glutamine amidotransferase type-1 domain maps to 291 to 533 (TIAIVGKYVE…VGASLKHHGE (243 aa)). An L-glutamine-binding site is contributed by glycine 353. Cysteine 380 functions as the Nucleophile; for glutamine hydrolysis in the catalytic mechanism. L-glutamine-binding positions include 381 to 384 (LGMQ), glutamate 404, and arginine 461. Residues histidine 506 and glutamate 508 contribute to the active site.

It belongs to the CTP synthase family. As to quaternary structure, homotetramer.

The catalysed reaction is UTP + L-glutamine + ATP + H2O = CTP + L-glutamate + ADP + phosphate + 2 H(+). It carries out the reaction L-glutamine + H2O = L-glutamate + NH4(+). The enzyme catalyses UTP + NH4(+) + ATP = CTP + ADP + phosphate + 2 H(+). The protein operates within pyrimidine metabolism; CTP biosynthesis via de novo pathway; CTP from UDP: step 2/2. Its activity is regulated as follows. Allosterically activated by GTP, when glutamine is the substrate; GTP has no effect on the reaction when ammonia is the substrate. The allosteric effector GTP functions by stabilizing the protein conformation that binds the tetrahedral intermediate(s) formed during glutamine hydrolysis. Inhibited by the product CTP, via allosteric rather than competitive inhibition. Its function is as follows. Catalyzes the ATP-dependent amination of UTP to CTP with either L-glutamine or ammonia as the source of nitrogen. Regulates intracellular CTP levels through interactions with the four ribonucleotide triphosphates. This chain is CTP synthase, found in Syntrophotalea carbinolica (strain DSM 2380 / NBRC 103641 / GraBd1) (Pelobacter carbinolicus).